A 626-amino-acid chain; its full sequence is Chaperone protein HtpG (626 aa).

The segment at 1 to 331 (MSETVERHEF…TDDLPLNVSR (331 aa)) is a; substrate-binding. Residues 332-544 (EMLQSTPTLQ…GMGPDLQMQR (213 aa)) are b. The tract at residues 545–626 (LLRRAGRGFG…GTVAKPAESA (82 aa)) is c.

This sequence belongs to the heat shock protein 90 family. In terms of assembly, homodimer.

Its subcellular location is the cytoplasm. Its function is as follows. Molecular chaperone. Has ATPase activity. In Methylorubrum populi (strain ATCC BAA-705 / NCIMB 13946 / BJ001) (Methylobacterium populi), this protein is Chaperone protein HtpG.